Consider the following 387-residue polypeptide: Involucrin (387 aa).

2 disordered regions span residues 1–319 and 347–387; these read MSQQ…VHLG and VCIP…LKQE. Residues 28–37 show a composition bias toward polar residues; it reads NTQQDQMKQP. Residues 62–71 show a composition bias toward low complexity; sequence QVPEQECEPQ. 4 stretches are compositionally biased toward basic and acidic residues: residues 85 to 96, 104 to 115, 147 to 179, and 231 to 245; these read KQQEPQEQEVHP, QEQEAHLGKKQE, QEVH…KQLQ, and QLEK…ELHL.

This sequence belongs to the involucrin family. As to quaternary structure, directly or indirectly cross-linked to cornifelin (CNFN). Substrate of transglutaminase. Specific glutamines or lysines are cross-linked to keratins, desmoplakin and to inter involucrin molecules. In terms of tissue distribution, keratinocytes of epidermis and other stratified squamous epithelia.

It is found in the cytoplasm. In terms of biological role, part of the insoluble cornified cell envelope (CE) of stratified squamous epithelia. This Cephalopachus bancanus (Western tarsier) protein is Involucrin (IVL).